Reading from the N-terminus, the 249-residue chain is Triosephosphate isomerase (249 aa).

9–11 provides a ligand contact to substrate; the sequence is NWK. Catalysis depends on His95, which acts as the Electrophile. The Proton acceptor role is filled by Glu167. Residues Gly173, Ser213, and 234 to 235 each bind substrate; that span reads GG.

It belongs to the triosephosphate isomerase family. In terms of assembly, homodimer.

It is found in the cytoplasm. It catalyses the reaction D-glyceraldehyde 3-phosphate = dihydroxyacetone phosphate. Its pathway is carbohydrate biosynthesis; gluconeogenesis. It participates in carbohydrate degradation; glycolysis; D-glyceraldehyde 3-phosphate from glycerone phosphate: step 1/1. Involved in the gluconeogenesis. Catalyzes stereospecifically the conversion of dihydroxyacetone phosphate (DHAP) to D-glyceraldehyde-3-phosphate (G3P). In Dictyoglomus thermophilum (strain ATCC 35947 / DSM 3960 / H-6-12), this protein is Triosephosphate isomerase.